The following is a 485-amino-acid chain: NADH-quinone oxidoreductase subunit N (485 aa).

14 helical membrane-spanning segments follow: residues Leu-8 to Ile-28, Phe-35 to Val-55, Phe-75 to Leu-95, Phe-105 to Leu-125, Ala-127 to Phe-147, Tyr-159 to Ala-179, Leu-203 to Phe-223, Pro-235 to Met-255, Leu-271 to Gln-291, Ile-303 to Leu-323, Val-326 to Leu-346, Leu-371 to Ile-393, His-406 to Leu-426, and Ala-449 to Leu-469.

It belongs to the complex I subunit 2 family. In terms of assembly, NDH-1 is composed of 13 different subunits. Subunits NuoA, H, J, K, L, M, N constitute the membrane sector of the complex.

It is found in the cell inner membrane. The catalysed reaction is a quinone + NADH + 5 H(+)(in) = a quinol + NAD(+) + 4 H(+)(out). Functionally, NDH-1 shuttles electrons from NADH, via FMN and iron-sulfur (Fe-S) centers, to quinones in the respiratory chain. The immediate electron acceptor for the enzyme in this species is believed to be ubiquinone. Couples the redox reaction to proton translocation (for every two electrons transferred, four hydrogen ions are translocated across the cytoplasmic membrane), and thus conserves the redox energy in a proton gradient. The chain is NADH-quinone oxidoreductase subunit N from Sodalis glossinidius (strain morsitans).